The following is an 809-amino-acid chain: Cyclic nucleotide-gated channel beta-3 (809 aa).

Disordered regions lie at residues 1–121 (MFKS…PPAA) and 153–178 (GDLS…ESDD). Topologically, residues 1–218 (MFKSLTKVNK…SIDSYTDRLY (218 aa)) are cytoplasmic. Residues 22–31 (QSSRRNEEGS) show a composition bias toward basic and acidic residues. The span at 32 to 43 (HPSNQSQQTTAQ) shows a compositional bias: polar residues. A compositionally biased stretch (basic and acidic residues) spans 44-53 (EENKGEEKSL). Residues 55 to 88 (TKSTPVTSEEPHTNIQDKLSKKNSSGDLTTNPDP) are compositionally biased toward polar residues. The helical transmembrane segment at 219–242 (LLWLLLVTLAYNWNCCFIPLRLVF) threads the bilayer. Over 243–249 (PYQTADN) the chain is Extracellular. A helical membrane pass occupies residues 250–270 (IHYWLIADIICDIIYLYDMLF). At 271–299 (IQPRLQFVRGGDIIVDSNELRKHYRTSTK) the chain is on the cytoplasmic side. The chain crosses the membrane as a helical span at residues 300–317 (FQLDVASIIPFDICYLFF). The Extracellular portion of the chain corresponds to 318–320 (GFN). A helical transmembrane segment spans residues 321–335 (PMFRANRMLKYTSFF). The Cytoplasmic portion of the chain corresponds to 336–348 (EFNHHLESIMDKA). The ion conduction pathway stretch occupies residues 348–447 (AYIYRVIRTT…IGQMRDVIGA (100 aa)). A helical membrane pass occupies residues 349–371 (YIYRVIRTTGYLLFILHINACVY). Over 372–393 (YWASNYEGIGTTRWVYDGEGNE) the chain is Extracellular. 2 consecutive transmembrane segments (helical) span residues 394-420 (YLRC…LFEI) and 421-445 (VFQL…RDVI). The selectivity filter stretch occupies residues 407–410 (TIGG). The Cytoplasmic segment spans residues 446 to 809 (GAATANQNYF…TIEVKEKAKQ (364 aa)). The segment at 450–526 (ANQNYFRACM…SIISKVDLFK (77 aa)) is C-linker. The segment at 530–646 (TQMIYDMLLR…ILMKKARVLL (117 aa)) is cyclic nucleotide-binding domain. 4 residues coordinate 3',5'-cyclic GMP: glycine 591, glutamate 592, arginine 604, and threonine 605. A disordered region spans residues 698 to 776 (QAAQKKENSE…PHSVRRTVLP (79 aa)). Residues 716–755 (NEDKQKENEDKQKENEDKGKENEDKDKGREPEEKPLDRPE) show a composition bias toward basic and acidic residues.

Belongs to the cyclic nucleotide-gated cation channel (TC 1.A.1.5) family. CNGB3 subfamily. As to quaternary structure, forms heterotetrameric channels composed of CNGA3 and CNGB3 subunits with 3:1 stoichiometry. Expressed specifically in the retina.

It is found in the cell membrane. The catalysed reaction is Ca(2+)(in) = Ca(2+)(out). It carries out the reaction Na(+)(in) = Na(+)(out). It catalyses the reaction K(+)(in) = K(+)(out). The enzyme catalyses NH4(+)(in) = NH4(+)(out). The catalysed reaction is Rb(+)(in) = Rb(+)(out). It carries out the reaction Li(+)(in) = Li(+)(out). It catalyses the reaction Cs(+)(in) = Cs(+)(out). In terms of biological role, pore-forming subunit of the cone cyclic nucleotide-gated channel. Mediates cone photoresponses at bright light converting transient changes in intracellular cGMP levels into electrical signals. In the dark, cGMP levels are high and keep the channel open enabling a steady inward current carried by Na(+) and Ca(2+) ions that leads to membrane depolarization and neurotransmitter release from synaptic terminals. Upon photon absorption cGMP levels decline leading to channel closure and membrane hyperpolarization that ultimately slows neurotransmitter release and signals the presence of light, the end point of the phototransduction cascade. Conducts cGMP- and cAMP-gated ion currents, with permeability for monovalent and divalent cations. The polypeptide is Cyclic nucleotide-gated channel beta-3 (Homo sapiens (Human)).